Reading from the N-terminus, the 1127-residue chain is DNA-directed RNA polymerase I subunit RPA2 homolog (1127 aa).

Ser-1025 is modified (phosphoserine).

It belongs to the RNA polymerase beta chain family. As to quaternary structure, component of the RNA polymerase I (Pol I) complex consisting of at least 13 subunits.

The protein localises to the nucleus. It localises to the nucleolus. It carries out the reaction RNA(n) + a ribonucleoside 5'-triphosphate = RNA(n+1) + diphosphate. With respect to regulation, antisense ribosomal siRNAs silence rRNA expression during the elongation phase by decreasing rpoa-2 occupancy downstream of the RNAi-targeted region in nrde-2-dependent manner. In terms of biological role, DNA-dependent RNA polymerase catalyzes the transcription of DNA into RNA using the four ribonucleoside triphosphates as substrates. Second largest core component of RNA polymerase I which synthesizes ribosomal RNA precursors. Proposed to contribute to the polymerase catalytic activity and forms the polymerase active center together with the largest subunit. Pol I is composed of mobile elements and RPA2 is part of the core element with the central large cleft and probably a clamp element that moves to open and close the cleft. Specifically binds to 18S, 5.8S and 26S rDNA, but not to 5S rDNA. The protein is DNA-directed RNA polymerase I subunit RPA2 homolog of Caenorhabditis elegans.